The sequence spans 361 residues: RuBisCO accumulation factor 1 (361 aa).

The tract at residues 16–197 is N-terminal alpha-helix; sequence NELAQELLRK…RKQIEQLLVD (182 aa). Residues 221 to 347 are C-terminal beta-sheet; sequence PRIVPVVGQL…VIILVRPRRI (127 aa).

The protein belongs to the RAF family. In terms of assembly, homodimer. Forms an RbcL(8)-Raf1(8) complex. Each Raf1 dimer clamps the exterior of an RbcL dimer, protecting it. The extreme C-terminus (residues 354-361) inserts into the catalytic pocket of RbcL where the Glu-361 forms a salt bridge with 'Lys-202'. This insertion probably contributes to the assembly of RbcL(8). Forms complexes of many stoichiometries with RbcL with and without RbcS. RbcX and Raf1 can bind simultaneously to RbcL.

The protein localises to the cytoplasm. Its function is as follows. A major RuBisCO chaperone. Acts after GroEL-GroES chaperonin to fold and/or assemble the large subunit of RuBisCO (ccbL, rbcL). Cooperates with RbcX in RbcL folding, plays the major role in assembly of dimers into RbcL(8)-Raf1(8) intermediate complexes. RbcS replaces Raf1, leading to holoenzyme formation. Functionally, in vitro acts as an antagonist to CcmM35, suggesting it might regulate RuBisCO condensation and decondensation. In Nostoc sp. (strain PCC 7120 / SAG 25.82 / UTEX 2576), this protein is RuBisCO accumulation factor 1.